A 634-amino-acid chain; its full sequence is Phototropic-responsive NPH3 family protein NPY2 (634 aa).

The 69-residue stretch at 29–97 (SDISVDVEGS…CYGMTVTLSA (69 aa)) folds into the BTB domain. The NPH3 domain occupies 207 to 488 (DWWVEDLCEL…VQVLFFEQVR (282 aa)). Tyr429 carries the post-translational modification Phosphotyrosine. Disordered stretches follow at residues 492-517 (SSGS…YGSS) and 584-634 (QLQS…VSVS). Positions 588 to 602 (KGGGEKNNGGGGGGS) are enriched in gly residues. Positions 619-634 (KTATPSRNLTRRVSVS) are enriched in polar residues.

It belongs to the NPH3 family. As to expression, specifically expressed in the hypophysis and the root meristems in the embryos. Highly expressed in primary root tips and radicles.

Its subcellular location is the cell membrane. The protein resides in the cytoplasm. The protein localises to the cytosol. It participates in protein modification; protein ubiquitination. In terms of biological role, may act as a substrate-specific adapter of an E3 ubiquitin-protein ligase complex (CUL3-RBX1-BTB) which mediates the ubiquitination and subsequent proteasomal degradation of target proteins. Plays an essential role in auxin-mediated organogenesis and in root gravitropic responses through the control of PIN proteins (e.g. PIN1 and PIN2) polarity in the root tip endodermal cell layer and in shoot epidermis. Recruited to the plasma membrane by PINs (e.g. PIN1 and PIN2) and, in concert with AGC kinases-mediated (e.g. D6PK and PID) PINs phosphorylation, maintains their polarity through limiting lateral diffusion-based escape. The chain is Phototropic-responsive NPH3 family protein NPY2 from Arabidopsis thaliana (Mouse-ear cress).